Consider the following 65-residue polypeptide: Large ribosomal subunit protein bL35 (65 aa).

The interval 1–21 (MPKMKTKSGAAKRFTVRAGGT) is disordered.

Belongs to the bacterial ribosomal protein bL35 family.

This chain is Large ribosomal subunit protein bL35, found in Nitrosospira multiformis (strain ATCC 25196 / NCIMB 11849 / C 71).